We begin with the raw amino-acid sequence, 227 residues long: N-acetyltransferase family 8 member 7 (227 aa).

The next 2 membrane-spanning stretches (helical) occupy residues Met36 to Ala56 and Gly58 to Ala78. Positions Leu61–Thr220 constitute an N-acetyltransferase domain.

It belongs to the camello family.

It is found in the membrane. The enzyme catalyses L-lysyl-[protein] + acetyl-CoA = N(6)-acetyl-L-lysyl-[protein] + CoA + H(+). Functionally, has histone acetyltransferase activity in vitro, with specificity for histone H4. The protein is N-acetyltransferase family 8 member 7 of Mus musculus (Mouse).